Reading from the N-terminus, the 308-residue chain is GDP-L-colitose synthase (308 aa).

Residues 7-13 and 101-104 each bind NADP(+); these read GAGGMVG and LGSS. The active-site Proton donor/acceptor is tyrosine 132. NADP(+) is bound by residues lysine 136, 160-163, and histidine 176; that span reads PCNL. Residues lysine 184, tryptophan 199, and arginine 206 each contribute to the substrate site.

The protein belongs to the NAD(P)-dependent epimerase/dehydratase family. Fucose synthase subfamily. Homodimer.

It carries out the reaction GDP-beta-L-colitose + NAD(+) = GDP-4-dehydro-3,6-dideoxy-alpha-D-mannose + NADH + H(+). The catalysed reaction is GDP-beta-L-colitose + NADP(+) = GDP-4-dehydro-3,6-dideoxy-alpha-D-mannose + NADPH + H(+). It participates in nucleotide-sugar metabolism; GDP-L-colitose biosynthesis. Involved in the biosynthesis of the L-colitose (3,6-dideoxyl-L-xylo-hexose) present in the O-antigen region of lipopolysaccharides (LPS) where it serves as antigenic determinant and are vital for bacterial defense and survival. Catalyzes the two-step NADP-dependent conversion of GDP-4-keto-3,6-dideoxy-D-mannose to GDP-L-colitose. ColC is a bifunctional enzyme catalyzing the C-5 epimerization of GDP-4-keto-3,6-dideoxy-D-mannose and the subsequent C-4 keto reduction of the resulting L-epimer to give GDP-L-colitose. It can use both NADP(+) and NAD(+) as electron acceptor, with a slight preference for NADP(+). The protein is GDP-L-colitose synthase of Yersinia pseudotuberculosis.